The following is a 232-amino-acid chain: U-scoloptoxin(11)-Sa3a (232 aa).

The N-terminal stretch at 1–21 is a signal peptide; the sequence is MFQFCLLILLLAPGRFFSALG.

It belongs to the scoloptoxin-11 family. Post-translationally, contains 8 disulfide bonds. In terms of tissue distribution, expressed by the venom gland.

The protein resides in the secreted. In Scolopendra alternans (Florida Keys giant centipede), this protein is U-scoloptoxin(11)-Sa3a.